The primary structure comprises 657 residues: Endoplasmic reticulum mannosyl-oligosaccharide 1,2-alpha-mannosidase (657 aa).

The Cytoplasmic segment spans residues 1-49 (MYPPPPAPAPHRDFISVTLSLGESYDNSKSRRRRSCWRKWKQLSRLQRN). Residues 50-70 (VILFVLGFLILCGFLYSLQVS) form a helical membrane-spanning segment. Residues 71 to 657 (DQWKALSGSR…AHPLPIWSPA (587 aa)) are Lumenal-facing. Ser-101 bears the Phosphoserine mark. Positions 118–157 (HLRRGPPHLQIRPPNTVSKDGMQDDAKEREAALGKAQQEE) are disordered. A compositionally biased stretch (basic and acidic residues) spans 138–157 (GMQDDAKEREAALGKAQQEE). Residue Glu-288 is the Proton donor of the active site. Asp-421 is an active-site residue. Cys-485 and Cys-514 are disulfide-bonded. The active-site Proton donor is the Glu-528. Glu-557 is an active-site residue. Thr-646 lines the Ca(2+) pocket.

This sequence belongs to the glycosyl hydrolase 47 family. Requires Ca(2+) as cofactor.

It is found in the endoplasmic reticulum membrane. It catalyses the reaction N(4)-(alpha-D-Man-(1-&gt;2)-alpha-D-Man-(1-&gt;2)-alpha-D-Man-(1-&gt;3)-[alpha-D-Man-(1-&gt;2)-alpha-D-Man-(1-&gt;3)-[alpha-D-Man-(1-&gt;2)-alpha-D-Man-(1-&gt;6)]-alpha-D-Man-(1-&gt;6)]-beta-D-Man-(1-&gt;4)-beta-D-GlcNAc-(1-&gt;4)-beta-D-GlcNAc)-L-asparaginyl-[protein] (N-glucan mannose isomer 9A1,2,3B1,2,3) + 4 H2O = N(4)-(alpha-D-Man-(1-&gt;3)-[alpha-D-Man-(1-&gt;3)-[alpha-D-Man-(1-&gt;6)]-alpha-D-Man-(1-&gt;6)]-beta-D-Man-(1-&gt;4)-beta-D-GlcNAc-(1-&gt;4)-beta-D-GlcNAc)-L-asparaginyl-[protein] (N-glucan mannose isomer 5A1,2) + 4 beta-D-mannose. The enzyme catalyses N(4)-(alpha-D-Man-(1-&gt;2)-alpha-D-Man-(1-&gt;2)-alpha-D-Man-(1-&gt;3)-[alpha-D-Man-(1-&gt;3)-[alpha-D-Man-(1-&gt;2)-alpha-D-Man-(1-&gt;6)]-alpha-D-Man-(1-&gt;6)]-beta-D-Man-(1-&gt;4)-beta-D-GlcNAc-(1-&gt;4)-beta-D-GlcNAc)-L-asparaginyl-[protein] (N-glucan mannose isomer 8A1,2,3B1,3) + 3 H2O = N(4)-(alpha-D-Man-(1-&gt;3)-[alpha-D-Man-(1-&gt;3)-[alpha-D-Man-(1-&gt;6)]-alpha-D-Man-(1-&gt;6)]-beta-D-Man-(1-&gt;4)-beta-D-GlcNAc-(1-&gt;4)-beta-D-GlcNAc)-L-asparaginyl-[protein] (N-glucan mannose isomer 5A1,2) + 3 beta-D-mannose. It participates in protein modification; protein glycosylation. Functionally, involved in glycoprotein quality control targeting of misfolded glycoproteins for degradation. It primarily trims a single alpha-1,2-linked mannose residue from Man(9)GlcNAc(2) to produce Man(8)GlcNAc(2), but at high enzyme concentrations, as found in the ER quality control compartment (ERQC), it further trims the carbohydrates to Man(5-6)GlcNAc(2). This Rattus norvegicus (Rat) protein is Endoplasmic reticulum mannosyl-oligosaccharide 1,2-alpha-mannosidase (Man1b1).